A 379-amino-acid polypeptide reads, in one-letter code: Cytochrome b (379 aa).

A run of 4 helical transmembrane segments spans residues 33–53, 77–98, 113–133, and 178–198; these read FGSLLGMCLMIQILTGLFLAM, WLIRYLHANGASMFFICLFIHV, WNIGIILFFTTMATAFVGYVL, and FFAFHFILPFIITAFVLVHLL. The heme b site is built by H83 and H97. Heme b-binding residues include H182 and H196. Position 201 (H201) interacts with a ubiquinone. A run of 4 helical transmembrane segments spans residues 226–246, 288–308, 320–340, and 347–367; these read IKDLLGILFLLMALMILALFF, LGGVLALLLSILILMAFPLLN, ITQIIYWILIANLLVLTWIGG, and FTMIGQIASITYFTIILILMP.

It belongs to the cytochrome b family. In terms of assembly, the cytochrome bc1 complex contains 11 subunits: 3 respiratory subunits (MT-CYB, CYC1 and UQCRFS1), 2 core proteins (UQCRC1 and UQCRC2) and 6 low-molecular weight proteins (UQCRH/QCR6, UQCRB/QCR7, UQCRQ/QCR8, UQCR10/QCR9, UQCR11/QCR10 and a cleavage product of UQCRFS1). This cytochrome bc1 complex then forms a dimer. Requires heme b as cofactor.

It localises to the mitochondrion inner membrane. Component of the ubiquinol-cytochrome c reductase complex (complex III or cytochrome b-c1 complex) that is part of the mitochondrial respiratory chain. The b-c1 complex mediates electron transfer from ubiquinol to cytochrome c. Contributes to the generation of a proton gradient across the mitochondrial membrane that is then used for ATP synthesis. This chain is Cytochrome b (MT-CYB), found in Akodon dayi (Day's grass mouse).